A 91-amino-acid polypeptide reads, in one-letter code: Small ribosomal subunit protein uS19 (91 aa).

Belongs to the universal ribosomal protein uS19 family.

In terms of biological role, protein S19 forms a complex with S13 that binds strongly to the 16S ribosomal RNA. This Parasynechococcus marenigrum (strain WH8102) protein is Small ribosomal subunit protein uS19.